A 326-amino-acid chain; its full sequence is MKRPRAPSGSDGESDGPIDVGQENDLSQMARPLTTPSPSQMQARKKRRGIIEKRRRDRINSSLSELRRLVPTAFEKQGSSKLEKAEVLQMTVDHLKMLHASGGTGFFDARALAVDFRSIGFRECLTEVIRYLGVLEGPSSHADPVRIRLLSHLKSYAAEMEPSPTTTSALAFPVWPWSFLHSCPGLPSLNSQLAILGRVPGPVLPSISSPPYPISALRSAPVHRPAGTIPPTRRNLLPSRGVTSTQRAHLPERPAAPPPTALDARAARSIVPIPPCSPTTAPGAGKSDDNVSGSISSPCPSGPTGRPAGAVFYHSWVSEITEIGAF.

Positions 1–56 (MKRPRAPSGSDGESDGPIDVGQENDLSQMARPLTTPSPSQMQARKKRRGIIEKRRR) are disordered. The tract at residues 42-111 (QARKKRRGII…GGTGFFDARA (70 aa)) is transcriptional repression and interaction with NCOR1 and SIN3A. Positions 43-98 (ARKKRRGIIEKRRRDRINSSLSELRRLVPTAFEKQGSSKLEKAEVLQMTVDHLKML) constitute a bHLH domain. Residues 116–153 (FRSIGFRECLTEVIRYLGVLEGPSSHADPVRIRLLSHL) enclose the Orange domain. Disordered stretches follow at residues 223–260 (HRPA…PPPT) and 272–306 (PIPP…PTGR). A compositionally biased stretch (low complexity) spans 292–305 (SGSISSPCPSGPTG).

Belongs to the HEY family. Interacts with HES1, HDAC1, NCOR1 and SIN3A. Self-associates. Interacts with GATA4, GATA6, HEY1 and HEY2. In terms of tissue distribution, expressed in heart and at lower levels in brain, lung, muscle, ovary and testis.

The protein resides in the nucleus. In terms of biological role, transcriptional repressor which binds preferentially to the canonical E box sequence 5'-CACGTG-3'. Downstream effector of Notch signaling required for cardiovascular development. Specifically required for the Notch-induced endocardial epithelial to mesenchymal transition, which is itself criticial for cardiac valve and septum development. Represses transcription by the cardiac transcriptional activators GATA4 and GATA6. The sequence is that of Hairy/enhancer-of-split related with YRPW motif-like protein (Heyl) from Mus musculus (Mouse).